Here is a 260-residue protein sequence, read N- to C-terminus: Acyl-[acyl-carrier-protein]--UDP-N-acetylglucosamine O-acyltransferase (260 aa).

The protein belongs to the transferase hexapeptide repeat family. LpxA subfamily. As to quaternary structure, homotrimer.

The protein resides in the cytoplasm. It carries out the reaction a (3R)-hydroxyacyl-[ACP] + UDP-N-acetyl-alpha-D-glucosamine = a UDP-3-O-[(3R)-3-hydroxyacyl]-N-acetyl-alpha-D-glucosamine + holo-[ACP]. The protein operates within glycolipid biosynthesis; lipid IV(A) biosynthesis; lipid IV(A) from (3R)-3-hydroxytetradecanoyl-[acyl-carrier-protein] and UDP-N-acetyl-alpha-D-glucosamine: step 1/6. In terms of biological role, involved in the biosynthesis of lipid A, a phosphorylated glycolipid that anchors the lipopolysaccharide to the outer membrane of the cell. The protein is Acyl-[acyl-carrier-protein]--UDP-N-acetylglucosamine O-acyltransferase of Sulfurovum sp. (strain NBC37-1).